Consider the following 232-residue polypeptide: Putative N-acetylmannosamine-6-phosphate 2-epimerase (232 aa).

This sequence belongs to the NanE family.

It carries out the reaction an N-acyl-D-glucosamine 6-phosphate = an N-acyl-D-mannosamine 6-phosphate. The protein operates within amino-sugar metabolism; N-acetylneuraminate degradation; D-fructose 6-phosphate from N-acetylneuraminate: step 3/5. Converts N-acetylmannosamine-6-phosphate (ManNAc-6-P) to N-acetylglucosamine-6-phosphate (GlcNAc-6-P). The chain is Putative N-acetylmannosamine-6-phosphate 2-epimerase from Corynebacterium glutamicum (strain R).